The sequence spans 378 residues: Probable 3-hydroxyisobutyryl-CoA hydrolase 2 (378 aa).

Substrate contacts are provided by Gly-115, Glu-138, and Asp-146. The Microbody targeting signal signature appears at 376-378; sequence AKL.

It belongs to the enoyl-CoA hydratase/isomerase family.

It is found in the peroxisome. It catalyses the reaction 3-hydroxy-2-methylpropanoyl-CoA + H2O = 3-hydroxy-2-methylpropanoate + CoA + H(+). It functions in the pathway amino-acid degradation; L-valine degradation. In terms of biological role, involved in valine catabolism. The polypeptide is Probable 3-hydroxyisobutyryl-CoA hydrolase 2 (Arabidopsis thaliana (Mouse-ear cress)).